The primary structure comprises 512 residues: Retinaldehyde dehydrogenase 3 (512 aa).

The segment at 1–22 (MATTNGAVENGQPDGKPPALPR) is disordered. A2 carries the post-translational modification N-acetylalanine. NAD(+)-binding positions include K204, E207, and 257–262 (GSTEVG). The Proton acceptor role is filled by E280. C314 acts as the Nucleophile in catalysis. 2 residues coordinate NAD(+): Q361 and E411.

Belongs to the aldehyde dehydrogenase family. In terms of assembly, homotetramer. Detected in embryonic head (at protein level). Ventral retina.

It localises to the cytoplasm. It carries out the reaction retinal + NAD(+) + H2O = retinoate + NADH + 2 H(+). It catalyses the reaction all-trans-retinal + NAD(+) + H2O = all-trans-retinoate + NADH + 2 H(+). The enzyme catalyses all-trans-13,14-dihydroretinal + NAD(+) + H2O = all-trans-13,14-dihydroretinoate + NADH + 2 H(+). The protein operates within cofactor metabolism; retinol metabolism. In terms of biological role, catalyzes the NAD-dependent oxidation of aldehyde substrates, such as all-trans-retinal and all-trans-13,14-dihydroretinal, to their corresponding carboxylic acids, all-trans-retinoate and all-trans-13,14-dihydroretinoate, respectively. High specificity for all-trans-retinal as substrate, can also accept acetaldehyde as substrate in vitro but with lower affinity. Required for the biosynthesis of normal levels of retinoate in the embryonic ocular and nasal regions; a critical lipid in the embryonic development of the eye and the nasal region. This Mus musculus (Mouse) protein is Retinaldehyde dehydrogenase 3 (Aldh1a3).